A 454-amino-acid chain; its full sequence is Cytochrome b-c1 complex subunit 2, mitochondrial (454 aa).

The N-terminal 35 residues, 1 to 35, are a transit peptide targeting the mitochondrion; sequence MISRSALSRGSQLALRRPAAAKTAQRGFAAAAASP.

This sequence belongs to the peptidase M16 family. UQCRC2/QCR2 subfamily. In terms of assembly, component of the ubiquinol-cytochrome c oxidoreductase (cytochrome b-c1 complex, complex III, CIII), a multisubunit enzyme composed of 10 subunits. The complex is composed of 3 respiratory subunits cytochrome b (cob), cytochrome c1 (cyt-1) and Rieske protein (fes-1), 2 core protein subunits pep and ucr-1, and 5 low-molecular weight protein subunits qcr6, qcr7, qcr8, qcr9 and probably NCU16844/qcr10. The complex exists as an obligatory dimer and forms supercomplexes (SCs) in the inner mitochondrial membrane with NADH-ubiquinone oxidoreductase (complex I, CI) and cytochrome c oxidase (complex IV, CIV), resulting in different assemblies (supercomplexes SCI(1)III(2), SCIII(2)IV(1) and SCIII(2)IV(2) as well as higher order I(x)III(y)IV(z) megacomplexes).

The protein resides in the mitochondrion inner membrane. Its function is as follows. Component of the ubiquinol-cytochrome c oxidoreductase, a multisubunit transmembrane complex that is part of the mitochondrial electron transport chain which drives oxidative phosphorylation. The respiratory chain contains 3 multisubunit complexes succinate dehydrogenase (complex II, CII), ubiquinol-cytochrome c oxidoreductase (cytochrome b-c1 complex, complex III, CIII) and cytochrome c oxidase (complex IV, CIV), that cooperate to transfer electrons derived from NADH and succinate to molecular oxygen, creating an electrochemical gradient over the inner membrane that drives transmembrane transport and the ATP synthase. The cytochrome b-c1 complex catalyzes electron transfer from ubiquinol to cytochrome c, linking this redox reaction to translocation of protons across the mitochondrial inner membrane, with protons being carried across the membrane as hydrogens on the quinol. In the process called Q cycle, 2 protons are consumed from the matrix, 4 protons are released into the intermembrane space and 2 electrons are passed to cytochrome c. This is Cytochrome b-c1 complex subunit 2, mitochondrial (ucr-1) from Neurospora crassa (strain ATCC 24698 / 74-OR23-1A / CBS 708.71 / DSM 1257 / FGSC 987).